The chain runs to 287 residues: Acetylglutamate kinase (287 aa).

Residues 64–65 (GG), arginine 86, and asparagine 181 each bind substrate.

The protein belongs to the acetylglutamate kinase family. ArgB subfamily.

Its subcellular location is the cytoplasm. The catalysed reaction is N-acetyl-L-glutamate + ATP = N-acetyl-L-glutamyl 5-phosphate + ADP. The protein operates within amino-acid biosynthesis; L-arginine biosynthesis; N(2)-acetyl-L-ornithine from L-glutamate: step 2/4. In terms of biological role, catalyzes the ATP-dependent phosphorylation of N-acetyl-L-glutamate. The chain is Acetylglutamate kinase from Desulforamulus reducens (strain ATCC BAA-1160 / DSM 100696 / MI-1) (Desulfotomaculum reducens).